Consider the following 223-residue polypeptide: Golgi SNAP receptor complex member 1 (223 aa).

At serine 2 the chain carries N-acetylserine. At serine 2–asparagine 204 the chain is on the cytoplasmic side. Serine 164 is modified (phosphoserine). Residues alanine 205–threonine 222 traverse the membrane as a helical; Anchor for type IV membrane protein segment. Residue tryptophan 223 is a topological domain, vesicular.

Belongs to the GOSR1 family. Component of several multiprotein Golgi SNARE complexes. Identified in a Golgi SNARE complex consisting of t-SNARES SED5, YKT6, and the v-SNARE SFT1. Interacts with BET1. Interacts with BOS1. Interacts with SEC22. Interacts with PEP12. Interacts with self.

The protein localises to the golgi apparatus membrane. Involved in transport from the ER to the Golgi apparatus as well as in intra-Golgi transport. It belongs to a super-family of proteins called t-SNAREs or soluble NSF (N-ethylmaleimide-sensitive factor) attachment protein receptor. Rescues alpha-factor maturation defects. The chain is Golgi SNAP receptor complex member 1 (GOS1) from Saccharomyces cerevisiae (strain ATCC 204508 / S288c) (Baker's yeast).